The sequence spans 112 residues: Large ribosomal subunit protein bL21 (112 aa).

Belongs to the bacterial ribosomal protein bL21 family. As to quaternary structure, part of the 50S ribosomal subunit. Contacts protein L20.

Its function is as follows. This protein binds to 23S rRNA in the presence of protein L20. The sequence is that of Large ribosomal subunit protein bL21 from Buchnera aphidicola subsp. Baizongia pistaciae (strain Bp).